The sequence spans 182 residues: LIM domain-containing protein C (182 aa).

LIM zinc-binding domains follow at residues 3-63 and 110-170; these read SICP…LFRQ and TNCP…KFGP.

It localises to the cell projection. The protein resides in the pseudopodium. The protein localises to the cytoplasm. Its subcellular location is the cell cortex. It is found in the cytoskeleton. Its function is as follows. Binds to F-actin and may modulate the chemotactic response during early development and contribute to the maintenance of the strength of the actin cytoskeleton. This Dictyostelium discoideum (Social amoeba) protein is LIM domain-containing protein C (limC).